Here is a 67-residue protein sequence, read N- to C-terminus: Alpha-conotoxin-like Qc1.1b (67 aa).

The N-terminal stretch at 1 to 21 (MGMRMMFTMFLLVVLAITVVS) is a signal peptide. Positions 22-46 (FTSDHASDGRNTAANDKASKLMALR) are excised as a propeptide. Disulfide bonds link cysteine 49/cysteine 55 and cysteine 50/cysteine 63. The lacks the Ser-Xaa-Pro motif that is crucial for potent interaction with nAChR stretch occupies residues 51–53 (DNP).

This sequence belongs to the conotoxin A superfamily. In terms of tissue distribution, expressed by the venom duct.

Its subcellular location is the secreted. In terms of biological role, alpha-conotoxins act on postsynaptic membranes, they bind to the nicotinic acetylcholine receptors (nAChR) and thus inhibit them. Has possibly a distinct nAChR binding mode from other alpha-conotoxins, due to a different three residue motif (lacks the Ser-Xaa-Pro motif). The chain is Alpha-conotoxin-like Qc1.1b from Conus quercinus (Oak cone).